The primary structure comprises 625 residues: Grainyhead-like protein 2 homolog (625 aa).

Disordered regions lie at residues 1–24 (MSQE…PPFN), 82–112 (VSKA…GGEN), and 428–453 (EERK…SDGK). Residues 1–93 (MSQESDNNKR…KASDSQEDQE (93 aa)) form a transcription activation region. 2 stretches are compositionally biased toward polar residues: residues 98–109 (LGTSEAQSNLSG) and 440–451 (QASQTQCNSSSD). Positions 244 to 482 (SSGTFQYTLE…DLHSQPVLFI (239 aa)) constitute a Grh/CP2 DB domain.

This sequence belongs to the grh/CP2 family. Grainyhead subfamily. As to quaternary structure, homodimer, also forms heterodimers with GRHL1 or GRHL3. Expressed in keratinocytes (at protein level). Highly expressed in placenta, prostate, brain and kidney. Lower-level expression in a variety of epithelial tissues such as thymus, lung, salivary gland, mammary gland and digestive tract. Expressed in the cochlear. Expressed in corneal epithelial cells, but not in the endothelium or stroma.

It localises to the nucleus. It is found in the membrane. Transcription factor playing an important role in primary neurulation and in epithelial development. Binds directly to the consensus DNA sequence 5'-AACCGGTT-3' acting as an activator and repressor on distinct target genes. During embryogenesis, plays unique and cooperative roles with GRHL3 in establishing distinct zones of primary neurulation. Essential for closure 3 (rostral end of the forebrain), functions cooperatively with GRHL3 in closure 2 (forebrain/midbrain boundary) and posterior neuropore closure. Regulates epithelial morphogenesis acting as a target gene-associated transcriptional activator of apical junctional complex components. Up-regulates of CLDN3 and CLDN4, as well as of RAB25, which increases the CLDN4 protein and its localization at tight junctions. Comprises an essential component of the transcriptional machinery that establishes appropriate expression levels of CLDN4 and CDH1 in different types of epithelia. Exhibits functional redundancy with GRHL3 in epidermal morphogenetic events and epidermal wound repair. In lung, forms a regulatory loop with NKX2-1 that coordinates lung epithelial cell morphogenesis and differentiation. In keratinocytes, plays a role in telomerase activation during cellular proliferation, regulates TERT expression by binding to TERT promoter region and inhibiting DNA methylation at the 5'-CpG island, possibly by interfering with DNMT1 enzyme activity. In addition, impairs keratinocyte differentiation and epidermal function by inhibiting the expression of genes clustered at the epidermal differentiation complex (EDC) as well as GRHL1 and GRHL3 through epigenetic mechanisms. This Homo sapiens (Human) protein is Grainyhead-like protein 2 homolog (GRHL2).